We begin with the raw amino-acid sequence, 245 residues long: 1-(5-phosphoribosyl)-5-[(5-phosphoribosylamino)methylideneamino] imidazole-4-carboxamide isomerase (245 aa).

The active-site Proton acceptor is aspartate 7. Aspartate 129 (proton donor) is an active-site residue.

The protein belongs to the HisA/HisF family.

Its subcellular location is the cytoplasm. The enzyme catalyses 1-(5-phospho-beta-D-ribosyl)-5-[(5-phospho-beta-D-ribosylamino)methylideneamino]imidazole-4-carboxamide = 5-[(5-phospho-1-deoxy-D-ribulos-1-ylimino)methylamino]-1-(5-phospho-beta-D-ribosyl)imidazole-4-carboxamide. The protein operates within amino-acid biosynthesis; L-histidine biosynthesis; L-histidine from 5-phospho-alpha-D-ribose 1-diphosphate: step 4/9. The sequence is that of 1-(5-phosphoribosyl)-5-[(5-phosphoribosylamino)methylideneamino] imidazole-4-carboxamide isomerase from Shewanella loihica (strain ATCC BAA-1088 / PV-4).